Consider the following 183-residue polypeptide: Putative manganese efflux pump MntP 1 (183 aa).

A run of 6 helical transmembrane segments spans residues 6–26, 36–56, 64–84, 100–120, 130–150, and 158–178; these read LFLL…CIGI, IIFV…GGYI, IVPI…ILMI, IMYL…GFTT, LFMS…LGII, and ISII…LFGL.

It belongs to the MntP (TC 9.B.29) family.

The protein localises to the cell membrane. Its function is as follows. Probably functions as a manganese efflux pump. The sequence is that of Putative manganese efflux pump MntP 1 from Clostridium botulinum (strain Langeland / NCTC 10281 / Type F).